We begin with the raw amino-acid sequence, 480 residues long: Plant UBX domain-containing protein 10 (480 aa).

Disordered stretches follow at residues 47 to 78 (DASSSAVDGGGNNRDHDHNNATVTPDYPPRGI) and 335 to 383 (ADQA…AARV). A coiled-coil region spans residues 330 to 389 (RAALEADQAREQQRQEEKERLEREAAEAERKLKEEEEARERAAREAEERQAARVRMRQEK). Residues 336–383 (DQAREQQRQEEKERLEREAAEAERKLKEEEEARERAAREAEERQAARV) are compositionally biased toward basic and acidic residues. Residues 399–477 (KGPDVTQVLV…GLHPQASLFI (79 aa)) enclose the UBX domain.

This is Plant UBX domain-containing protein 10 from Arabidopsis thaliana (Mouse-ear cress).